The primary structure comprises 364 residues: 3-dehydroquinate synthase (364 aa).

Residues 105-109 (GVVGD), 129-130 (TT), Lys142, and Lys151 contribute to the NAD(+) site. Zn(2+) is bound by residues Glu184, His247, and His264.

Belongs to the sugar phosphate cyclases superfamily. Dehydroquinate synthase family. The cofactor is Co(2+). Zn(2+) serves as cofactor. Requires NAD(+) as cofactor.

It is found in the cytoplasm. The enzyme catalyses 7-phospho-2-dehydro-3-deoxy-D-arabino-heptonate = 3-dehydroquinate + phosphate. It functions in the pathway metabolic intermediate biosynthesis; chorismate biosynthesis; chorismate from D-erythrose 4-phosphate and phosphoenolpyruvate: step 2/7. Functionally, catalyzes the conversion of 3-deoxy-D-arabino-heptulosonate 7-phosphate (DAHP) to dehydroquinate (DHQ). The polypeptide is 3-dehydroquinate synthase (Acidithiobacillus ferrooxidans (strain ATCC 23270 / DSM 14882 / CIP 104768 / NCIMB 8455) (Ferrobacillus ferrooxidans (strain ATCC 23270))).